Consider the following 338-residue polypeptide: MTQKKVAILGAGSWGTGLALVLADNNHKPVIWGNLDKIVNEINESHTNSHYLPDIILPTEVKATLSLDEAIDGAEIVVIAIPTNAMRVVCKQLNEALKEPTILVHVSKGIEPETNLRMSEVIEEEVDATKRKALVVLSGPSHAEEVALRHPTTLCASCKDLKAAEIVQDRFINNNLRIYTNDDVIGAEIGGALKNIIALGAGISDGLGYGDNAKAALMTRGMAEITRLGVAVGSNPQTFYGLTGIGDLIVTCTSVHSRNWRAGNMLGKGENLDEVLEKMGMVVEGVRTAKAVHGWAKKLDIDMPITESIYAILFENKDAREAVDLLMGRKKKIEKESF.

NADPH contacts are provided by serine 13, tryptophan 14, and lysine 108. Residues lysine 108, glycine 139, and serine 141 each coordinate sn-glycerol 3-phosphate. Alanine 143 contacts NADPH. Lysine 194, aspartate 247, serine 257, arginine 258, and asparagine 259 together coordinate sn-glycerol 3-phosphate. Lysine 194 serves as the catalytic Proton acceptor. Arginine 258 lines the NADPH pocket. Residues valine 282 and glutamate 284 each contribute to the NADPH site.

The protein belongs to the NAD-dependent glycerol-3-phosphate dehydrogenase family.

It localises to the cytoplasm. It carries out the reaction sn-glycerol 3-phosphate + NAD(+) = dihydroxyacetone phosphate + NADH + H(+). The catalysed reaction is sn-glycerol 3-phosphate + NADP(+) = dihydroxyacetone phosphate + NADPH + H(+). It participates in membrane lipid metabolism; glycerophospholipid metabolism. In terms of biological role, catalyzes the reduction of the glycolytic intermediate dihydroxyacetone phosphate (DHAP) to sn-glycerol 3-phosphate (G3P), the key precursor for phospholipid synthesis. The chain is Glycerol-3-phosphate dehydrogenase [NAD(P)+] from Listeria innocua serovar 6a (strain ATCC BAA-680 / CLIP 11262).